Reading from the N-terminus, the 948-residue chain is RNA polymerase-associated protein RapA (948 aa).

Residues 164–332 (EVADRSAPRV…FARLRLLDPN (169 aa)) enclose the Helicase ATP-binding domain. ATP is bound at residue 177-184 (DEVGLGKT). Positions 278-281 (DEAH) match the DEAH box motif. One can recognise a Helicase C-terminal domain in the interval 473–627 (RVDWLIDTLK…TCPTGNALQH (155 aa)).

The protein belongs to the SNF2/RAD54 helicase family. RapA subfamily. In terms of assembly, interacts with the RNAP. Has a higher affinity for the core RNAP than for the holoenzyme. Its ATPase activity is stimulated by binding to RNAP.

Transcription regulator that activates transcription by stimulating RNA polymerase (RNAP) recycling in case of stress conditions such as supercoiled DNA or high salt concentrations. Probably acts by releasing the RNAP, when it is trapped or immobilized on tightly supercoiled DNA. Does not activate transcription on linear DNA. Probably not involved in DNA repair. This chain is RNA polymerase-associated protein RapA, found in Pseudomonas putida (strain ATCC 700007 / DSM 6899 / JCM 31910 / BCRC 17059 / LMG 24140 / F1).